Consider the following 1072-residue polypeptide: DNA-directed RNA polymerase subunit beta (1072 aa).

Belongs to the RNA polymerase beta chain family. In plastids the minimal PEP RNA polymerase catalytic core is composed of four subunits: alpha, beta, beta', and beta''. When a (nuclear-encoded) sigma factor is associated with the core the holoenzyme is formed, which can initiate transcription.

It is found in the plastid. The protein localises to the chloroplast. The catalysed reaction is RNA(n) + a ribonucleoside 5'-triphosphate = RNA(n+1) + diphosphate. Its function is as follows. DNA-dependent RNA polymerase catalyzes the transcription of DNA into RNA using the four ribonucleoside triphosphates as substrates. The polypeptide is DNA-directed RNA polymerase subunit beta (Arabis hirsuta (Hairy rock-cress)).